Consider the following 240-residue polypeptide: MNAEKSPVNHNVDHEEIAKFEAVASRWWDLEGEFKPLHRINPLRLSYIAERAGGLFGKKVLDVGCGGGILAESMAREGATVTGLDMGFEPLQVAKLHALESGIQVDYVQETVEEHAAKHAGQYDVVTCMEMLEHVPDPQSVVRACAQLVKPGGDVFFSTLNRNGKSWLMAVVGAEYILRMVPKGTHDVKKFIKPAELLGWVDQTSLKERHITGLHYNPITNTFKLGPGVDVNYMLHTQNK.

4 residues coordinate S-adenosyl-L-methionine: arginine 44, glycine 64, aspartate 85, and methionine 129.

This sequence belongs to the methyltransferase superfamily. UbiG/COQ3 family.

It carries out the reaction a 3-demethylubiquinol + S-adenosyl-L-methionine = a ubiquinol + S-adenosyl-L-homocysteine + H(+). It catalyses the reaction a 3-(all-trans-polyprenyl)benzene-1,2-diol + S-adenosyl-L-methionine = a 2-methoxy-6-(all-trans-polyprenyl)phenol + S-adenosyl-L-homocysteine + H(+). It functions in the pathway cofactor biosynthesis; ubiquinone biosynthesis. Its function is as follows. O-methyltransferase that catalyzes the 2 O-methylation steps in the ubiquinone biosynthetic pathway. The sequence is that of Ubiquinone biosynthesis O-methyltransferase from Escherichia coli O157:H7.